The sequence spans 260 residues: Potassium inward rectifier (Kir)-like channel 3 (260 aa).

Positions 1–34 (MPMTPSEFKNRLLFGSLPRSSSDPTDLQFTEPNV) are disordered. The Cytoplasmic portion of the chain corresponds to 1–68 (MPMTPSEFKN…EQSVSKSIAR (68 aa)). The segment covering 18–31 (PRSSSDPTDLQFTE) has biased composition (polar residues). A helical transmembrane segment spans residues 69-89 (QALALLVVYLSLGVLIYWLTL). The pore-forming intramembrane region spans 127-146 (DSFCFSVMMVTTVGFGDRAF). The helical transmembrane segment at 153–173 (FLAAVWLLVSTLAVARAFLFL) threads the bilayer. Over 174 to 260 (ADARADKRNR…LVDLTTATSV (87 aa)) the chain is Cytoplasmic. EF-hand domains follow at residues 190–225 (LGES…QMEK) and 229–256 (EDFI…DLTT). Residues Asp-203, Asp-205, Asp-207, Arg-209, Glu-214, Asp-242, Ser-246, Arg-248, and Asp-253 each coordinate Ca(2+).

Belongs to the two pore domain potassium channel (TC 1.A.1.7) family. In terms of assembly, homotetramer. In terms of tissue distribution, expressed in hydathodes and the vascular tissues of roots, stems, leaves and flowers.

The protein resides in the vacuole membrane. Probable calcium-activated potassium channel. This chain is Potassium inward rectifier (Kir)-like channel 3 (KCO3), found in Arabidopsis thaliana (Mouse-ear cress).